The following is a 119-amino-acid chain: Chorion class CA protein ERA.5 (119 aa).

The first 21 residues, 1–21, serve as a signal peptide directing secretion; that stretch reads MSTYTFVLFCLQICLIQNVYS. The left arm stretch occupies residues 22–55; the sequence is QCLGRVGPGGPPVGPYGGPLGGPGYGPVGYGGCG. The interval 56-103 is central domain; the sequence is GYGGSGIGNVAVAGELPVAGSSAVMGQVPVIGAVEFAGPACAVGSVSI. The interval 104 to 119 is right arm; that stretch reads SGACGPTCGCGGSPYY.

This sequence belongs to the chorion protein family.

Functionally, this protein is one of many from the eggshell of the silk moth. This chain is Chorion class CA protein ERA.5 (ERA.5), found in Bombyx mori (Silk moth).